The primary structure comprises 782 residues: Homeotic protein proboscipedia (782 aa).

Disordered regions lie at residues 1–23, 153–195, 251–336, 358–380, 439–493, and 547–586; these read MQEV…ESPL, PQTP…VPEN, MKHK…GISS, SSVS…KDDG, IATP…QQQP, and YYNY…ADFE. An Antp-type hexapeptide motif is present at residues 164–169; the sequence is EYPWMK. A DNA-binding region (homeobox) is located at residues 198–257; the sequence is PRRLRTAYTNTQLLELEKEFHFNKYLCRPRRIEIAASLDLTERQVKVWFQNRRMKHKRQT. Residues 308–321 are compositionally biased toward low complexity; the sequence is NNNTPSATNNNPSA. Positions 322-336 are enriched in polar residues; that stretch reads GNLTPNSSLETGISS. Residues 452–463 show a composition bias toward gly residues; that stretch reads NGSGGGPAGGYF. The span at 464–493 shows a compositional bias: low complexity; sequence PGYYPSPKQQQQVQQQQLHPQQQQLPQQQP. Over residues 563–580 the composition is skewed to basic residues; the sequence is QQHHHHAQHHQQQQHHQN.

It belongs to the Antp homeobox family. Proboscipedia subfamily.

It is found in the nucleus. Sequence-specific transcription factor which is part of a developmental regulatory system that provides cells with specific positional identities on the anterior-posterior axis. Controls development of mouthparts, and labial and maxillary palps. This chain is Homeotic protein proboscipedia (pb), found in Drosophila melanogaster (Fruit fly).